We begin with the raw amino-acid sequence, 551 residues long: Glucans biosynthesis protein D (551 aa).

Positions 1 to 32 (MDRRRFIKGSMAMAAVCGTSGIASLFSQAAFA) form a signal peptide, tat-type signal.

This sequence belongs to the OpgD/OpgG family. Predicted to be exported by the Tat system. The position of the signal peptide cleavage has not been experimentally proven.

It is found in the periplasm. Its pathway is glycan metabolism; osmoregulated periplasmic glucan (OPG) biosynthesis. Its function is as follows. Probably involved in the control of the structural glucose backbone of osmoregulated periplasmic glucans (OPGs). The chain is Glucans biosynthesis protein D from Escherichia coli O139:H28 (strain E24377A / ETEC).